Here is a 145-residue protein sequence, read N- to C-terminus: MDHYLKKLQEIYTKLEGHPFLFSPSKTNEKEFITLLNQALASTQLYRSIQQLFLTMYKLDPIGFINYIKTSKQEYLCLLINPKLVTKFLKITSFKIYINFRLKTFYISPNKYNNFYTAPSEEKTNHLLKEEKTWAKIVEEGGEES.

It belongs to the asfivirus K145R family.

It is found in the virion. This is an uncharacterized protein from African swine fever virus (isolate Tick/South Africa/Pretoriuskop Pr4/1996) (ASFV).